The primary structure comprises 571 residues: Folylpolyglutamate synthase (571 aa).

122–125 (GKGS) contacts ATP. The Mg(2+) site is built by Ser146, Glu215, and His243. Positions 363 and 385 each coordinate ATP.

Belongs to the folylpolyglutamate synthase family. A monovalent cation serves as cofactor. Expressed in both shoots and roots, but expression in roots is higher compared with shoots. Distinct expression in the quiescent center (QC) region of the root tip. Also expressed in vascular tissues of the cotyledons and hypocotyls, and the first true leaves of 7 days old seedlings.

The protein localises to the plastid. It is found in the chloroplast. It carries out the reaction (6S)-5,6,7,8-tetrahydrofolyl-(gamma-L-Glu)(n) + L-glutamate + ATP = (6S)-5,6,7,8-tetrahydrofolyl-(gamma-L-Glu)(n+1) + ADP + phosphate + H(+). The protein operates within cofactor biosynthesis; tetrahydrofolylpolyglutamate biosynthesis. Functionally, catalyzes conversion of folates to polyglutamate derivatives allowing concentration of folate compounds in the cell and the intracellular retention of these cofactors, which are important substrates for most of the folate-dependent enzymes that are involved in one-carbon transfer reactions involved in purine, pyrimidine and amino acid synthesis. Essential for organellar and whole-plant folate homeostasis. Required for postembryonic root development. Generates polyglutamylated folate cofactors to support C1 metabolism required for meristem maintenance and cell expansion during postembryonic root development. The polypeptide is Folylpolyglutamate synthase (Arabidopsis thaliana (Mouse-ear cress)).